Consider the following 7481-residue polypeptide: Polyketide synthase GfsA (7481 aa).

A loading module (LM) region spans residues 24-1020; the sequence is ASDEPIAVIG…ETAEFVRARL (997 aa). Positions 26-451 constitute a Ketosynthase family 3 (KS3) 1 domain; the sequence is DEPIAVIGLS…GTNCHVVVSA (426 aa). The interval 60-80 is disordered; it reads RVPADRETPPSTEEESADGEA. Catalysis depends on Gln197, which acts as the For decarboxylation activity of LM. The active-site For acyltransferase activity of LM is Ser662. Positions 945–1020 constitute a Carrier 1 domain; it reads PDPVETVRQL…ETAEFVRARL (76 aa). At Ser980 the chain carries O-(pantetheine 4'-phosphoryl)serine. Residues 1038-1454 enclose the Ketosynthase family 3 (KS3) 2 domain; the sequence is DEPIAVVAMS…GTNAHVILEQ (417 aa). 4 module regions span residues 1038–2517, 2538–4063, 4084–5636, and 5655–7400; these read DEPI…AGEL, EDPI…LQRI, DDPI…GSEV, and DEPV…GEQL. Catalysis depends on for beta-ketoacyl synthase 1 activity residues Cys1201, His1336, and His1376. One can recognise a Carrier 2 domain in the interval 2442–2517; sequence RVLLDLVRGR…ALAEHLAGEL (76 aa). Position 2477 is an O-(pantetheine 4'-phosphoryl)serine (Ser2477). Residues 2538-2964 enclose the Ketosynthase family 3 (KS3) 3 domain; sequence EDPIAIVAMS…GTNAHVIIEE (427 aa). Active-site for beta-ketoacyl synthase 2 activity residues include Cys2711, His2846, and His2886. One can recognise a Carrier 3 domain in the interval 3988-4063; it reads QALQDLVLTE…ATTEYLLQRI (76 aa). Ser4023 is modified (O-(pantetheine 4'-phosphoryl)serine). The region spanning 4084–4514 is the Ketosynthase family 3 (KS3) 4 domain; sequence DDPIAIVAMG…GTNAHVILEQ (431 aa). Residues Cys4261, His4396, and His4436 each act as for beta-ketoacyl synthase 3 activity in the active site. A Carrier 4 domain is found at 5561–5636; the sequence is TALLDLIRGQ…ALAEYVGSEV (76 aa). An O-(pantetheine 4'-phosphoryl)serine modification is found at Ser5596. One can recognise a Ketosynthase family 3 (KS3) 5 domain in the interval 5655-6081; sequence DEPVAIIGMS…GTNAHVILEQ (427 aa). Catalysis depends on for beta-ketoacyl synthase 4 activity residues Cys5828, His5963, and His6003. Residues 6561–6685 form an N-terminal hotdog fold region; sequence HPLLGAAVAL…GVLASGAATV (125 aa). The 281-residue stretch at 6561–6841 folds into the PKS/mFAS DH domain; the sequence is HPLLGAAVAL…LRPVSADTIA (281 aa). The Proton acceptor; for dehydratase activity role is filled by His6593. The C-terminal hotdog fold stretch occupies residues 6700–6841; it reads ATAVDIDGLY…LRPVSADTIA (142 aa). The active-site Proton donor; for dehydratase activity is Asp6761. In terms of domain architecture, Carrier 5 spans 7325-7400; the sequence is QELLDFVCEH…LLAGHIGEQL (76 aa). At Ser7360 the chain carries O-(pantetheine 4'-phosphoryl)serine.

As to quaternary structure, homodimer. The loading module (LM, residues 13-926) dimerizes. LM cross-links to its cognate acyl-carrier domain in a manner that seems physiological; mutation of residues in the 2 domains alters reactions efficiency in a manner predicted by the cross-linked crystal. The cofactor is pantetheine 4'-phosphate.

The protein operates within antibiotic biosynthesis. First protein in the synthesis of the 16-membered macrolide antibiotics FD-891 and FD-892. Composed of 5 modules; the first is a loading module (LM) that synthesizes a starter unit used by the first elongation module for polyketide chain elongation. The starter unit is extended by multiple rounds of addition of malonyl-CoA or methylmalonyl-CoA, and other modifications to help generate the final products. The loading module (residues 1-927, LM with an inactive acyltransferase domain) preferentially decarboxylates malonyl-GfsA acyl carrier protein of the LM (ACP-LM) over methylmalonyl-GfsA ACP-LM and has no activity on malonyl-CoA or methymalonyl-CoA. LM decarboxylates malonyl-ACP-LM better than the malonyl-ACP-1 module of GfsA (i.e. the next module in the same protein) and has no activity on other malonyl-ACP modules. The protein is Polyketide synthase GfsA of Streptomyces halstedii.